The sequence spans 250 residues: Triosephosphate isomerase (250 aa).

Residue 9–11 (NWK) coordinates substrate. Catalysis depends on His94, which acts as the Electrophile. Glu166 functions as the Proton acceptor in the catalytic mechanism. Substrate contacts are provided by residues Gly172, Ser212, and 233–234 (GG).

The protein belongs to the triosephosphate isomerase family. As to quaternary structure, homodimer.

Its subcellular location is the cytoplasm. It carries out the reaction D-glyceraldehyde 3-phosphate = dihydroxyacetone phosphate. Its pathway is carbohydrate biosynthesis; gluconeogenesis. It functions in the pathway carbohydrate degradation; glycolysis; D-glyceraldehyde 3-phosphate from glycerone phosphate: step 1/1. Its function is as follows. Involved in the gluconeogenesis. Catalyzes stereospecifically the conversion of dihydroxyacetone phosphate (DHAP) to D-glyceraldehyde-3-phosphate (G3P). The sequence is that of Triosephosphate isomerase from Treponema denticola (strain ATCC 35405 / DSM 14222 / CIP 103919 / JCM 8153 / KCTC 15104).